A 197-amino-acid polypeptide reads, in one-letter code: Xanthine phosphoribosyltransferase (197 aa).

The xanthine site is built by L20 and N27. Residue 128-132 (ANGQA) participates in 5-phospho-alpha-D-ribose 1-diphosphate binding. K156 serves as a coordination point for xanthine.

It belongs to the purine/pyrimidine phosphoribosyltransferase family. Xpt subfamily. As to quaternary structure, homodimer.

It localises to the cytoplasm. The catalysed reaction is XMP + diphosphate = xanthine + 5-phospho-alpha-D-ribose 1-diphosphate. Its pathway is purine metabolism; XMP biosynthesis via salvage pathway; XMP from xanthine: step 1/1. In terms of biological role, converts the preformed base xanthine, a product of nucleic acid breakdown, to xanthosine 5'-monophosphate (XMP), so it can be reused for RNA or DNA synthesis. This chain is Xanthine phosphoribosyltransferase, found in Bacillus thuringiensis (strain Al Hakam).